Consider the following 96-residue polypeptide: Putative pterin-4-alpha-carbinolamine dehydratase (96 aa).

The protein belongs to the pterin-4-alpha-carbinolamine dehydratase family.

The catalysed reaction is (4aS,6R)-4a-hydroxy-L-erythro-5,6,7,8-tetrahydrobiopterin = (6R)-L-erythro-6,7-dihydrobiopterin + H2O. In Brucella anthropi (strain ATCC 49188 / DSM 6882 / CCUG 24695 / JCM 21032 / LMG 3331 / NBRC 15819 / NCTC 12168 / Alc 37) (Ochrobactrum anthropi), this protein is Putative pterin-4-alpha-carbinolamine dehydratase.